The primary structure comprises 252 residues: Small ribosomal subunit protein eS4 (252 aa).

The S4 RNA-binding domain maps to 43–105; the sequence is FPLLIIVRDI…TGETYRVIPV (63 aa).

Belongs to the eukaryotic ribosomal protein eS4 family.

This Staphylothermus marinus (strain ATCC 43588 / DSM 3639 / JCM 9404 / F1) protein is Small ribosomal subunit protein eS4.